The primary structure comprises 483 residues: Cobyric acid synthase (483 aa).

The GATase cobBQ-type domain occupies 244 to 430 (WLRVIAPVLP…LHGLFDHAEA (187 aa)). The active-site Nucleophile is the cysteine 325. Residue histidine 422 is part of the active site.

This sequence belongs to the CobB/CobQ family. CobQ subfamily.

The protein operates within cofactor biosynthesis; adenosylcobalamin biosynthesis. Catalyzes amidations at positions B, D, E, and G on adenosylcobyrinic A,C-diamide. NH(2) groups are provided by glutamine, and one molecule of ATP is hydrogenolyzed for each amidation. This Methylobacillus flagellatus (strain ATCC 51484 / DSM 6875 / VKM B-1610 / KT) protein is Cobyric acid synthase.